Reading from the N-terminus, the 121-residue chain is Small ribosomal subunit protein bS16 (121 aa).

A compositionally biased stretch (basic and acidic residues) spans 97–114 (LAKAKTKDEENDNSKVES). The tract at residues 97–121 (LAKAKTKDEENDNSKVESEGNEAES) is disordered.

This sequence belongs to the bacterial ribosomal protein bS16 family.

The chain is Small ribosomal subunit protein bS16 from Prochlorococcus marinus (strain AS9601).